Here is a 108-residue protein sequence, read N- to C-terminus: Integration host factor subunit alpha (108 aa).

The protein belongs to the bacterial histone-like protein family. Heterodimer of an alpha and a beta chain.

Functionally, this protein is one of the two subunits of integration host factor, a specific DNA-binding protein that functions in genetic recombination as well as in transcriptional and translational control. The polypeptide is Integration host factor subunit alpha (Bartonella henselae (strain ATCC 49882 / DSM 28221 / CCUG 30454 / Houston 1) (Rochalimaea henselae)).